The primary structure comprises 344 residues: L-erythro-3,5-diaminohexanoate dehydrogenase (344 aa).

It belongs to the KDD family. As to quaternary structure, homodimer.

It catalyses the reaction (3S,5S)-3,5-diaminohexanoate + NAD(+) + H2O = (5S)-5-amino-3-oxohexanoate + NH4(+) + NADH + H(+). It functions in the pathway amino-acid degradation; L-lysine degradation via acetate pathway. Functionally, involved in the anaerobic fermentation of lysine. Catalyzes the oxidative deamination of L-erythro-3,5-diaminohexanoate (3,5-DAH) to 3-keto-5-aminohexanoate (KAH). The protein is L-erythro-3,5-diaminohexanoate dehydrogenase of Acetoanaerobium sticklandii (strain ATCC 12662 / DSM 519 / JCM 1433 / CCUG 9281 / NCIMB 10654 / HF) (Clostridium sticklandii).